Reading from the N-terminus, the 396-residue chain is Elongation factor Tu (396 aa).

Positions 10 to 206 (KPHCNIGTIG…EVDAYIPQPE (197 aa)) constitute a tr-type G domain. The segment at 19-26 (GHVDHGKT) is G1. Residue 19–26 (GHVDHGKT) coordinates GTP. Thr26 is a binding site for Mg(2+). A G2 region spans residues 60-64 (GITIS). The G3 stretch occupies residues 81–84 (DCPG). Residues 81–85 (DCPGH) and 136–139 (NKCD) each bind GTP. The tract at residues 136–139 (NKCD) is G4. Residues 174 to 176 (SAL) are G5.

Belongs to the TRAFAC class translation factor GTPase superfamily. Classic translation factor GTPase family. EF-Tu/EF-1A subfamily. As to quaternary structure, monomer.

The protein resides in the cytoplasm. It carries out the reaction GTP + H2O = GDP + phosphate + H(+). Functionally, GTP hydrolase that promotes the GTP-dependent binding of aminoacyl-tRNA to the A-site of ribosomes during protein biosynthesis. This is Elongation factor Tu from Paramagnetospirillum magneticum (strain ATCC 700264 / AMB-1) (Magnetospirillum magneticum).